A 56-amino-acid chain; its full sequence is Prokaryotic ubiquitin-like protein UBact (56 aa).

Residues 1 to 28 are compositionally biased toward basic and acidic residues; the sequence is MPQDQQRKKQFDPNPNRDDSQRKTPVDK. The segment at 1-33 is disordered; it reads MPQDQQRKKQFDPNPNRDDSQRKTPVDKEIDDI. Glutamine 56 is subject to Deamidated glutamine. An Isoglutamyl lysine isopeptide (Gln-Lys) (interchain with K-? in acceptor proteins) cross-link involves residue glutamine 56.

It belongs to the ubiquitin-like protein UBact family. May be modified by deamidation of its C-terminal glutamine to glutamate by the adjacently encoded deamidase. This could be a prerequisite to the subsequent conjugation, as shown in the other prokaryotic ubiquitin-like protein Pup.

Its function is as follows. May function as a protein modifier covalently attached to lysine residues of substrate proteins. This may serve to target the modified proteins for degradation by proteasomes. The protein is Prokaryotic ubiquitin-like protein UBact of Yanofskybacteria sp. (strain GW2011_GWA1_39_13).